An 804-amino-acid polypeptide reads, in one-letter code: DNA mismatch repair protein MutS (804 aa).

Position 614–621 (614–621) interacts with ATP; that stretch reads GPNMAGKS.

This sequence belongs to the DNA mismatch repair MutS family.

This protein is involved in the repair of mismatches in DNA. It is possible that it carries out the mismatch recognition step. This protein has a weak ATPase activity. In Ehrlichia ruminantium (strain Gardel), this protein is DNA mismatch repair protein MutS.